The following is a 1384-amino-acid chain: DNA-directed RNA polymerase subunit beta (1384 aa).

The protein belongs to the RNA polymerase beta chain family. In terms of assembly, the RNAP catalytic core consists of 2 alpha, 1 beta, 1 beta' and 1 omega subunit. When a sigma factor is associated with the core the holoenzyme is formed, which can initiate transcription.

It catalyses the reaction RNA(n) + a ribonucleoside 5'-triphosphate = RNA(n+1) + diphosphate. Functionally, DNA-dependent RNA polymerase catalyzes the transcription of DNA into RNA using the four ribonucleoside triphosphates as substrates. In Stenotrophomonas maltophilia (strain R551-3), this protein is DNA-directed RNA polymerase subunit beta.